Consider the following 541-residue polypeptide: Zingiberene synthase (541 aa).

Mg(2+) contacts are provided by D295, D299, N439, S443, and E447. The DDXXD motif motif lies at 295–299 (DDIID).

Belongs to the terpene synthase family. Mg(2+) serves as cofactor. Requires Mn(2+) as cofactor.

It localises to the cytoplasm. The enzyme catalyses (2E,6E)-farnesyl diphosphate = alpha-zingiberene + diphosphate. The protein operates within secondary metabolite biosynthesis; terpenoid biosynthesis. Sesquiterpene synthase converting farnesyl diphosphate into two major products, zingiberene &gt; beta-sesquiphellandrene, and five minor products, 7-epi-sesquithujene, sesquisabinene A, (E)-alpha-bergamotene, (E)-beta-farnesene and beta-bisabolene. Can also accept geranyl diphosphate as substrate, producing nine monoterpenes, with myrcene, limonene and alpha-terpinolene as the major products. The polypeptide is Zingiberene synthase (TPS1) (Sorghum bicolor (Sorghum)).